A 592-amino-acid polypeptide reads, in one-letter code: MPSRTGPKMEGSGGRVRLKAHYGGDIFITSVDAATTFEELCEEVRDMCRLHQQHPLTLKWVDSEGDPCTVSSQMELEEAFRLARQCRDEGLIIHVFPSTPEQPGLPCPGEDKSIYRRGARRWRKLYRANGHLFQAKRFNRRAYCGQCSERIWGLARQGYRCINCKLLVHKRCHGLVPLTCRKHMDSVMPSQEPPVDDKNEDADLPSEETDGIAYISSSRKHDSIKDDSEDLKPVIDGMDGIKISQGLGLQDFDLIRVIGRGSYAKVLLVRLKKNDQIYAMKVVKKELVHDDEDIDWVQTEKHVFEQASSNPFLVGLHSCFQTTSRLFLVIEYVNGGDLMFHMQRQRKLPEEHARFYAAEICIALNFLHERGIIYRDLKLDNVLLDADGHIKLTDYGMCKEGLGPGDTTSTFCGTPNYIAPEILRGEEYGFSVDWWALGVLMFEMMAGRSPFDIITDNPDMNTEDYLFQVILEKPIRIPRFLSVKASHVLKGFLNKDPKERLGCRPQTGFSDIKSHAFFRSIDWDLLEKKQALPPFQPQITDDYGLDNFDTQFTSEPVQLTPDDEDAIKRIDQSEFEGFEYINPLLLSTEESV.

The PB1 domain occupies 15–98 (RVRLKAHYGG…EGLIIHVFPS (84 aa)). Positions 79-145 (AFRLARQCRD…KRFNRRAYCG (67 aa)) are interaction with SQSTM1. The Phorbol-ester/DAG-type zinc finger occupies 130 to 180 (GHLFQAKRFNRRAYCGQCSERIWGLARQGYRCINCKLLVHKRCHGLVPLTC). The 267-residue stretch at 252–518 (FDLIRVIGRG…FSDIKSHAFF (267 aa)) folds into the Protein kinase domain. ATP contacts are provided by residues 258-266 (IGRGSYAKV) and K281. Residue D376 is the Proton acceptor of the active site. A Phosphothreonine; by PDPK1 and PI3K modification is found at T410. An AGC-kinase C-terminal domain is found at 519–590 (RSIDWDLLEK…INPLLLSTEE (72 aa)). The residue at position 560 (T560) is a Phosphothreonine. Residue S591 is modified to Phosphoserine.

The protein belongs to the protein kinase superfamily. AGC Ser/Thr protein kinase family. PKC subfamily. In terms of assembly, forms a ternary complex with SQSTM1 and KCNAB2. Forms another ternary complex with SQSTM1 and GABRR3. Forms a complex with SQSTM1 and MAP2K5. Interacts with PARD6A, PARD6B, PARD6G and SQSTM1. Part of a complex with PARD3, PARD6A or PARD6B or PARD6G and CDC42 or RAC1. Interacts with ADAP1/CENTA1. Forms a ternary complex composed of SQSTM1 and PAWR. Interacts directly with SQSTM1. Interacts with IKBKB. Interacts (via the protein kinase domain) with WWC1. Forms a tripartite complex with WWC1 and DDR1, but predominantly in the absence of collagen. Component of the Par polarity complex, composed of at least phosphorylated PRKCZ, PARD3 and TIAM1. Interacts with PDPK1 (via N-terminal region). Interacts with WDFY2 (via WD repeats 1-3). Interacts with VAMP2. Forms a complex with WDFY2 and VAMP2. Interacts with APPL1. Interacts with WWC1, WWC2 and WWC3. In terms of processing, CDH5 is required for its phosphorylation at Thr-410. Phosphorylated by protein kinase PDPK1; phosphorylation is inhibited by the apoptotic C-terminal cleavage product of PKN2. Phosphorylation at Thr-410 by PI3K activates the kinase. In terms of tissue distribution, expressed in brain, and to a lesser extent in lung, kidney and testis.

Its subcellular location is the cytoplasm. It localises to the endosome. The protein resides in the cell junction. The protein localises to the membrane. The catalysed reaction is L-seryl-[protein] + ATP = O-phospho-L-seryl-[protein] + ADP + H(+). It carries out the reaction L-threonyl-[protein] + ATP = O-phospho-L-threonyl-[protein] + ADP + H(+). Its activity is regulated as follows. Atypical PKCs (PRKCI and PRKCZ) exhibit an elevated basal enzymatic activity (that may be due to the interaction with SMG1 or SQSTM1) and are not regulated by diacylglycerol, phosphatidylserine, phorbol esters or calcium ions. Two specific sites, Thr-410 (activation loop of the kinase domain) and Thr-560 (turn motif), need to be phosphorylated for its full activation. Phosphatidylinositol 3,4,5-trisphosphate might be a physiological activator. Isoform 2: Constitutively active. Functionally, calcium- and diacylglycerol-independent serine/threonine-protein kinase that functions in phosphatidylinositol 3-kinase (PI3K) pathway and mitogen-activated protein (MAP) kinase cascade, and is involved in NF-kappa-B activation, mitogenic signaling, cell proliferation, cell polarity, inflammatory response and maintenance of long-term potentiation (LTP). Upon lipopolysaccharide (LPS) treatment in macrophages, or following mitogenic stimuli, functions downstream of PI3K to activate MAP2K1/MEK1-MAPK1/ERK2 signaling cascade independently of RAF1 activation. Required for insulin-dependent activation of AKT3, but may function as an adapter rather than a direct activator. Upon insulin treatment may act as a downstream effector of PI3K and contribute to the activation of translocation of the glucose transporter SLC2A4/GLUT4 and subsequent glucose transport in adipocytes. In EGF-induced cells, binds and activates MAP2K5/MEK5-MAPK7/ERK5 independently of its kinase activity and can activate JUN promoter through MEF2C. Through binding with SQSTM1/p62, functions in interleukin-1 signaling and activation of NF-kappa-B with the specific adapters RIPK1 and TRAF6. Participates in TNF-dependent transactivation of NF-kappa-B by phosphorylating and activating IKBKB kinase, which in turn leads to the degradation of NF-kappa-B inhibitors. In migrating astrocytes, forms a cytoplasmic complex with PARD6A and is recruited by CDC42 to function in the establishment of cell polarity along with the microtubule motor and dynein. In association with FEZ1, stimulates neuronal differentiation in PC12 cells. In the inflammatory response, is required for the T-helper 2 (Th2) differentiation process, including interleukin production, efficient activation of JAK1 and the subsequent phosphorylation and nuclear translocation of STAT6. May be involved in development of allergic airway inflammation (asthma), a process dependent on Th2 immune response. In the NF-kappa-B-mediated inflammatory response, can relieve SETD6-dependent repression of NF-kappa-B target genes by phosphorylating the RELA subunit at 'Ser-311'. Phosphorylates VAMP2 in vitro. Phosphorylates and activates LRRK1, which phosphorylates RAB proteins involved in intracellular trafficking. Involved in late synaptic long term potention phase in CA1 hippocampal cells and long term memory maintenance. In Homo sapiens (Human), this protein is Protein kinase C zeta type (PRKCZ).